Reading from the N-terminus, the 473-residue chain is ATP synthase subunit beta (473 aa).

Residue 158 to 165 (GGAGVGKT) participates in ATP binding.

This sequence belongs to the ATPase alpha/beta chains family. As to quaternary structure, F-type ATPases have 2 components, CF(1) - the catalytic core - and CF(0) - the membrane proton channel. CF(1) has five subunits: alpha(3), beta(3), gamma(1), delta(1), epsilon(1). CF(0) has three main subunits: a(1), b(2) and c(9-12). The alpha and beta chains form an alternating ring which encloses part of the gamma chain. CF(1) is attached to CF(0) by a central stalk formed by the gamma and epsilon chains, while a peripheral stalk is formed by the delta and b chains.

It localises to the cell membrane. The catalysed reaction is ATP + H2O + 4 H(+)(in) = ADP + phosphate + 5 H(+)(out). Functionally, produces ATP from ADP in the presence of a proton gradient across the membrane. The catalytic sites are hosted primarily by the beta subunits. The chain is ATP synthase subunit beta from Bacillus pumilus (strain SAFR-032).